A 240-amino-acid polypeptide reads, in one-letter code: 1-(5-phosphoribosyl)-5-[(5-phosphoribosylamino)methylideneamino] imidazole-4-carboxamide isomerase (240 aa).

Aspartate 8 functions as the Proton acceptor in the catalytic mechanism. The Proton donor role is filled by aspartate 129.

Belongs to the HisA/HisF family.

Its subcellular location is the cytoplasm. It catalyses the reaction 1-(5-phospho-beta-D-ribosyl)-5-[(5-phospho-beta-D-ribosylamino)methylideneamino]imidazole-4-carboxamide = 5-[(5-phospho-1-deoxy-D-ribulos-1-ylimino)methylamino]-1-(5-phospho-beta-D-ribosyl)imidazole-4-carboxamide. The protein operates within amino-acid biosynthesis; L-histidine biosynthesis; L-histidine from 5-phospho-alpha-D-ribose 1-diphosphate: step 4/9. The chain is 1-(5-phosphoribosyl)-5-[(5-phosphoribosylamino)methylideneamino] imidazole-4-carboxamide isomerase from Herpetosiphon aurantiacus (strain ATCC 23779 / DSM 785 / 114-95).